A 437-amino-acid polypeptide reads, in one-letter code: MSQPTITVVGAGLAGSEAAWQIAQAGVKVKLYEMRPKTQTPAHHTDKFAELVCSNSLRANTLTNAVGVLKEEMRRLNSVIIDSADRCAVPAGGALAVDRHEFAAHVTDAVRNHPLVEVVSEEITEIPDGIVVIATGPLTSPALSTKLKELTGEEYLYFYDAAAPIIEKDSIDMNKVFVASRYDKGEAAYLNCPMTEEEFNRFYDALISAETVPLKEFEKEIFFEGCMPIEVLAKRGHKTMTFGPMKPVGLVDPRTGKKSYAVVQLRQDNSAATLYNIVGFQTHLKWPDQKRVFSLIPGLENCEIVRYGVMHRNTFINSPKLLKPTYQYKDRETLFFAGQMTGVEGYVESAASGLLAGINAARLAKGEELIELPPETIMGSMARYITTADPKHFQPMNANFGLVPEWPERIRDKRLKNEKLAERALDTIQNFTQERHN.

10-15 (GAGLAG) provides a ligand contact to FAD.

It belongs to the MnmG family. TrmFO subfamily. FAD is required as a cofactor.

It is found in the cytoplasm. The catalysed reaction is uridine(54) in tRNA + (6R)-5,10-methylene-5,6,7,8-tetrahydrofolate + NADH + H(+) = 5-methyluridine(54) in tRNA + (6S)-5,6,7,8-tetrahydrofolate + NAD(+). It carries out the reaction uridine(54) in tRNA + (6R)-5,10-methylene-5,6,7,8-tetrahydrofolate + NADPH + H(+) = 5-methyluridine(54) in tRNA + (6S)-5,6,7,8-tetrahydrofolate + NADP(+). Catalyzes the folate-dependent formation of 5-methyl-uridine at position 54 (M-5-U54) in all tRNAs. The chain is Methylenetetrahydrofolate--tRNA-(uracil-5-)-methyltransferase TrmFO from Brevibacillus brevis (strain 47 / JCM 6285 / NBRC 100599).